Reading from the N-terminus, the 119-residue chain is Protein TusC (119 aa).

It belongs to the DsrF/TusC family. In terms of assembly, heterohexamer, formed by a dimer of trimers. The hexameric TusBCD complex contains 2 copies each of TusB, TusC and TusD. The TusBCD complex interacts with TusE.

The protein localises to the cytoplasm. In terms of biological role, part of a sulfur-relay system required for 2-thiolation of 5-methylaminomethyl-2-thiouridine (mnm(5)s(2)U) at tRNA wobble positions. This Klebsiella pneumoniae subsp. pneumoniae (strain ATCC 700721 / MGH 78578) protein is Protein TusC.